The chain runs to 464 residues: Dihydrolipoyllysine-residue succinyltransferase component of 2-oxoglutarate dehydrogenase complex 1, mitochondrial (464 aa).

Residues 1–86 (MMLRAVFRRA…TALQRWVRPF (86 aa)) constitute a mitochondrion transit peptide. Residues 93–168 (VVEAVVPHMG…EPGNKVARIS (76 aa)) enclose the Lipoyl-binding domain. K134 carries the post-translational modification N6-lipoyllysine. Residues 168 to 242 (STSADAVSHV…DRERRVPMTR (75 aa)) form a disordered region. Over residues 196–210 (EKPKVESTKVAEKPK) the composition is skewed to basic and acidic residues. A compositionally biased stretch (pro residues) spans 211–220 (APSPPPPPPS). Residues H435 and D439 contribute to the active site.

This sequence belongs to the 2-oxoacid dehydrogenase family. In terms of assembly, forms a 24-polypeptide structural core with octahedral symmetry. (R)-lipoate serves as cofactor.

The protein localises to the mitochondrion. The catalysed reaction is N(6)-[(R)-dihydrolipoyl]-L-lysyl-[protein] + succinyl-CoA = N(6)-[(R)-S(8)-succinyldihydrolipoyl]-L-lysyl-[protein] + CoA. It participates in amino-acid degradation; L-lysine degradation via saccharopine pathway; glutaryl-CoA from L-lysine: step 6/6. Its function is as follows. The 2-oxoglutarate dehydrogenase complex catalyzes the overall conversion of 2-oxoglutarate to succinyl-CoA and CO(2). It contains multiple copies of three enzymatic components: 2-oxoglutarate dehydrogenase (E1), dihydrolipoamide succinyltransferase (E2) and lipoamide dehydrogenase (E3). The protein is Dihydrolipoyllysine-residue succinyltransferase component of 2-oxoglutarate dehydrogenase complex 1, mitochondrial of Arabidopsis thaliana (Mouse-ear cress).